A 305-amino-acid polypeptide reads, in one-letter code: Tetraspanin-12 (305 aa).

Residues 1 to 12 (MAREDSVKCLRC) are Cytoplasmic-facing. Residues cysteine 9 and cysteine 12 are each lipidated (S-palmitoyl cysteine). The helical transmembrane segment at 13-33 (LLYALNLLFWLMSISVLAVSA) threads the bilayer. Residues 34–59 (WMRDYLNNVLTLTAETRVEEAVILTY) are Extracellular-facing. A helical membrane pass occupies residues 60–80 (FPVVHPVMIAVCCFLIIVGML). Cysteine 83 carries S-palmitoyl cysteine lipidation. A helical membrane pass occupies residues 90–110 (LLLLAWYFGTLLVIFCVELAC). Over 111–224 (GVWTYEQEVM…RGTKQLQVLR (114 aa)) the chain is Extracellular. The helical transmembrane segment at 225–245 (FLGISIGVTQILAMILTITLL) threads the bilayer. Over 246–305 (WALYYDRREPGTDQMLSLKNDASQHLSCHSVELLKPSLSRIFEHTSMANSFNTHFEMEEL) the chain is Cytoplasmic.

This sequence belongs to the tetraspanin (TM4SF) family. As to quaternary structure, component of a complex, at least composed of TSPAN12, FZD4 and norrin (NDP). Interacts (when palmitoylated) with ADAM10. Interacts with MMP14/MT1-MMP. Post-translationally, palmitoylated; required for interaction with ADAM10. The precise position of palmitoylated residues is unclear and occurs either on Cys-9, Cys-12 and/or Cys-83.

Its subcellular location is the cell membrane. Its function is as follows. Regulator of cell surface receptor signal transduction. Plays a central role in retinal vascularization by regulating norrin (NDP) signal transduction. Acts in concert with norrin (NDP) to promote FZD4 multimerization and subsequent activation of FZD4, leading to promote accumulation of beta-catenin (CTNNB1) and stimulate LEF/TCF-mediated transcriptional programs. Suprisingly, it only activates the norrin (NDP)-dependent activation of FZD4, while it does not activate the Wnt-dependent activation of FZD4, suggesting the existence of a Wnt-independent signaling that also promote accumulation the beta-catenin (CTNNB1). Acts as a regulator of membrane proteinases such as ADAM10 and MMP14/MT1-MMP. Activates ADAM10-dependent cleavage activity of amyloid precursor protein (APP). Activates MMP14/MT1-MMP-dependent cleavage activity. The sequence is that of Tetraspanin-12 (Tspan12) from Rattus norvegicus (Rat).